The primary structure comprises 208 residues: ATP-dependent Clp protease proteolytic subunit (208 aa).

Residue S107 is the Nucleophile of the active site. The active site involves H132.

Belongs to the peptidase S14 family. As to quaternary structure, fourteen ClpP subunits assemble into 2 heptameric rings which stack back to back to give a disk-like structure with a central cavity, resembling the structure of eukaryotic proteasomes.

It is found in the cytoplasm. It carries out the reaction Hydrolysis of proteins to small peptides in the presence of ATP and magnesium. alpha-casein is the usual test substrate. In the absence of ATP, only oligopeptides shorter than five residues are hydrolyzed (such as succinyl-Leu-Tyr-|-NHMec, and Leu-Tyr-Leu-|-Tyr-Trp, in which cleavage of the -Tyr-|-Leu- and -Tyr-|-Trp bonds also occurs).. Its function is as follows. Cleaves peptides in various proteins in a process that requires ATP hydrolysis. Has a chymotrypsin-like activity. Plays a major role in the degradation of misfolded proteins. The sequence is that of ATP-dependent Clp protease proteolytic subunit from Methylorubrum extorquens (strain CM4 / NCIMB 13688) (Methylobacterium extorquens).